We begin with the raw amino-acid sequence, 180 residues long: Shikimate kinase (180 aa).

14–19 (GAGKST) is a binding site for ATP. Ser18 is a Mg(2+) binding site. Residues Asp36, Arg60, and Gly82 each coordinate substrate. Arg120 is a binding site for ATP. Arg140 is a binding site for substrate. Gln157 lines the ATP pocket.

The protein belongs to the shikimate kinase family. Monomer. The cofactor is Mg(2+).

The protein localises to the cytoplasm. The catalysed reaction is shikimate + ATP = 3-phosphoshikimate + ADP + H(+). Its pathway is metabolic intermediate biosynthesis; chorismate biosynthesis; chorismate from D-erythrose 4-phosphate and phosphoenolpyruvate: step 5/7. Functionally, catalyzes the specific phosphorylation of the 3-hydroxyl group of shikimic acid using ATP as a cosubstrate. The sequence is that of Shikimate kinase from Haemophilus influenzae (strain PittEE).